The chain runs to 579 residues: Putative ABC transporter ATP-binding protein VPA1482 (579 aa).

ABC transporter domains follow at residues 3 to 244 (IEFS…GIRE) and 299 to 533 (LEVR…ANLT). ATP is bound by residues 37–44 (GPSGSGKS) and 332–339 (GKNGSGKS).

This sequence belongs to the ABC transporter superfamily.

It is found in the cell inner membrane. Probably part of an ABC transporter complex. Responsible for energy coupling to the transport system. This is Putative ABC transporter ATP-binding protein VPA1482 from Vibrio parahaemolyticus serotype O3:K6 (strain RIMD 2210633).